We begin with the raw amino-acid sequence, 261 residues long: CD40 ligand (261 aa).

At 1–22 the chain is on the cytoplasmic side; it reads MVETYHQPAPRSAATGLPVSMK. The helical; Signal-anchor for type II membrane protein transmembrane segment at 23-43 threads the bilayer; that stretch reads IFMYLLTVFLITQMIGSALFA. Topologically, residues 44–261 are extracellular; it reads VYLHRRLDKI…GFTSFGLLKL (218 aa). The 140-residue stretch at 122 to 261 folds into the THD domain; sequence IAAHVISEAS…GFTSFGLLKL (140 aa). C178 and C218 form a disulfide bridge. N240 is a glycosylation site (N-linked (GlcNAc...) asparagine).

It belongs to the tumor necrosis factor family. Homotrimer. Interacts with CD28. CD40 ligand, soluble form: Exists as either a monomer or a homotrimer. Forms a ternary complex between CD40 and integrins for CD40-CD40LG signaling. The soluble form derives from the membrane form by proteolytic processing.

It localises to the cell membrane. The protein localises to the cell surface. The protein resides in the secreted. Cytokine that acts as a ligand to CD40/TNFRSF5. Costimulates T-cell proliferation and cytokine production. Its cross-linking on T-cells generates a costimulatory signal which enhances the production of IL4 and IL10 in conjunction with the TCR/CD3 ligation and CD28 costimulation. Induces the activation of NF-kappa-B. Induces the activation of kinases MAPK8 and PAK2 in T-cells. Mediates B-cell proliferation in the absence of co-stimulus as well as IgE production in the presence of IL4. Involved in immunoglobulin class switching. Its function is as follows. Acts as a ligand for integrins, specifically ITGA5:ITGB1 and ITGAV:ITGB3; both integrins and the CD40 receptor are required for activation of CD40-CD40LG signaling, which have cell-type dependent effects, such as B-cell activation, NF-kappa-B signaling and anti-apoptotic signaling. In Aotus trivirgatus (Three-striped night monkey), this protein is CD40 ligand (CD40LG).